Reading from the N-terminus, the 652-residue chain is Serine/threonine-protein kinase ssp1 (652 aa).

The residue at position 58 (Tyr58) is a Phosphotyrosine. Ser59 carries the phosphoserine modification. Tyr63 bears the Phosphotyrosine mark. One can recognise a Protein kinase domain in the interval 135 to 409 (YEIIKELGRG…LVEVKLHPWT (275 aa)). ATP contacts are provided by residues 141 to 149 (LGRGMHGKV) and Lys164. Residue Asp267 is the Proton acceptor of the active site. 2 disordered regions span residues 467–491 (DSSS…SIGL) and 506–529 (NESQ…SSEK). Positions 508 to 518 (SQKDRERKQVH) are enriched in basic and acidic residues.

It belongs to the protein kinase superfamily. Ser/Thr protein kinase family.

The protein localises to the cytoplasm. It carries out the reaction L-seryl-[protein] + ATP = O-phospho-L-seryl-[protein] + ADP + H(+). It catalyses the reaction L-threonyl-[protein] + ATP = O-phospho-L-threonyl-[protein] + ADP + H(+). Functionally, involved in actin localization and thus in polarized cell growth. The sequence is that of Serine/threonine-protein kinase ssp1 (ssp1) from Schizosaccharomyces pombe (strain 972 / ATCC 24843) (Fission yeast).